The following is a 159-amino-acid chain: uncharacterized protein (159 aa).

The next 3 membrane-spanning stretches (helical) occupy residues 16–36 (IVLP…AFIF), 84–104 (VYAG…LLII), and 112–132 (VFFY…LLPV).

The protein localises to the cell membrane. This is an uncharacterized protein from Bacillus subtilis (strain 168).